The following is a 370-amino-acid chain: Histidinol-phosphate aminotransferase 1 (370 aa).

K222 carries the post-translational modification N6-(pyridoxal phosphate)lysine.

This sequence belongs to the class-II pyridoxal-phosphate-dependent aminotransferase family. Histidinol-phosphate aminotransferase subfamily. As to quaternary structure, homodimer. The cofactor is pyridoxal 5'-phosphate.

It catalyses the reaction L-histidinol phosphate + 2-oxoglutarate = 3-(imidazol-4-yl)-2-oxopropyl phosphate + L-glutamate. Its pathway is amino-acid biosynthesis; L-histidine biosynthesis; L-histidine from 5-phospho-alpha-D-ribose 1-diphosphate: step 7/9. The chain is Histidinol-phosphate aminotransferase 1 (hisC1) from Bacillus anthracis.